Reading from the N-terminus, the 456-residue chain is 1,3-beta-glucanosyltransferase gas4 (456 aa).

Positions 1-25 (MGVANIIYALFLLGPSIFLKATAQT) are cleaved as a signal peptide. Cys-68 and Cys-97 form a disulfide bridge. 5 residues coordinate (1,3-beta-D-glucosyl)n: Tyr-86, Asn-156, Glu-157, Asp-197, and Arg-202. The Proton donor role is filled by Glu-157. 2 disulfides stabilise this stretch: Cys-211/Cys-350 and Cys-229/Cys-260. The N-linked (GlcNAc...) asparagine glycan is linked to Asn-248. The active-site Nucleophile is the Glu-257. Tyr-296 is a binding site for (1,3-beta-D-glucosyl)n. Disordered stretches follow at residues 334–353 (NPKGDGGYKKAGSPSKCPAN) and 384–434 (IEGP…ESGS). Asn-353 and Asn-415 each carry an N-linked (GlcNAc...) asparagine glycan. Over residues 417 to 434 (TSTTSYTSGMTSSSESGS) the composition is skewed to low complexity. A lipid anchor (GPI-anchor amidated serine) is attached at Ser-432. A propeptide spans 433–456 (GSSKIGVAFCQALFITVLIATLSF) (removed in mature form).

This sequence belongs to the glycosyl hydrolase 72 family.

It localises to the cell membrane. Functionally, splits internally a 1,3-beta-glucan molecule and transfers the newly generated reducing end (the donor) to the non-reducing end of another 1,3-beta-glucan molecule (the acceptor) forming a 1,3-beta linkage, resulting in the elongation of 1,3-beta-glucan chains in the cell wall. Involved in spore wall assembly. The chain is 1,3-beta-glucanosyltransferase gas4 (gas4) from Schizosaccharomyces pombe (strain 972 / ATCC 24843) (Fission yeast).